The primary structure comprises 82 residues: uncharacterized protein (82 aa).

It belongs to the chlamydial CPn_0711/CT_665/TC_0036 family.

This is an uncharacterized protein from Chlamydia pneumoniae (Chlamydophila pneumoniae).